A 215-amino-acid polypeptide reads, in one-letter code: N-(5'-phosphoribosyl)anthranilate isomerase (215 aa).

Belongs to the TrpF family.

The catalysed reaction is N-(5-phospho-beta-D-ribosyl)anthranilate = 1-(2-carboxyphenylamino)-1-deoxy-D-ribulose 5-phosphate. Its pathway is amino-acid biosynthesis; L-tryptophan biosynthesis; L-tryptophan from chorismate: step 3/5. This is N-(5'-phosphoribosyl)anthranilate isomerase from Paracoccus denitrificans (strain Pd 1222).